Consider the following 287-residue polypeptide: Cysteine-rich repeat secretory protein 59 (287 aa).

An N-terminal signal peptide occupies residues 1–26 (METTKKLSPIFCFSSLLCLFFTMNQA). Gnk2-homologous domains lie at 32-134 (HMDT…DKFF) and 140-250 (KKPN…ITTS). N-linked (GlcNAc...) asparagine glycosylation is found at N43, N47, N63, N72, N93, N103, N111, and N212.

The protein belongs to the cysteine-rich repeat secretory protein family.

It localises to the secreted. The protein is Cysteine-rich repeat secretory protein 59 (CRRSP59) of Arabidopsis thaliana (Mouse-ear cress).